A 422-amino-acid polypeptide reads, in one-letter code: Tyrosine--tRNA ligase (422 aa).

Residue tyrosine 35 coordinates L-tyrosine. Positions 40–49 (PTAPSLHVGH) match the 'HIGH' region motif. Tyrosine 170 and glutamine 174 together coordinate L-tyrosine. A 'KMSKS' region motif is present at residues 231–235 (KFGKT). Lysine 234 contributes to the ATP binding site. An S4 RNA-binding domain is found at 353–419 (APVVDLFAEV…GKKNLAAVEI (67 aa)).

Belongs to the class-I aminoacyl-tRNA synthetase family. TyrS type 1 subfamily. Homodimer.

The protein resides in the cytoplasm. It carries out the reaction tRNA(Tyr) + L-tyrosine + ATP = L-tyrosyl-tRNA(Tyr) + AMP + diphosphate + H(+). Its function is as follows. Catalyzes the attachment of tyrosine to tRNA(Tyr) in a two-step reaction: tyrosine is first activated by ATP to form Tyr-AMP and then transferred to the acceptor end of tRNA(Tyr). This Streptomyces coelicolor (strain ATCC BAA-471 / A3(2) / M145) protein is Tyrosine--tRNA ligase.